Here is a 212-residue protein sequence, read N- to C-terminus: Large ribosomal subunit protein uL3 (212 aa).

An N5-methylglutamine modification is found at glutamine 153.

This sequence belongs to the universal ribosomal protein uL3 family. As to quaternary structure, part of the 50S ribosomal subunit. Forms a cluster with proteins L14 and L19. Post-translationally, methylated by PrmB.

Its function is as follows. One of the primary rRNA binding proteins, it binds directly near the 3'-end of the 23S rRNA, where it nucleates assembly of the 50S subunit. This chain is Large ribosomal subunit protein uL3, found in Shewanella piezotolerans (strain WP3 / JCM 13877).